The chain runs to 315 residues: Bifunctional pinoresinol-lariciresinol reductase (315 aa).

Residues 14-20 (GGTGYLG), Arg39, and Lys48 contribute to the NADP(+) site. Lys142 (proton acceptor) is an active-site residue. Position 146 (Arg146) interacts with NADP(+). Substrate is bound at residue His274.

The protein belongs to the NmrA-type oxidoreductase family. Isoflavone reductase subfamily. As to quaternary structure, dimer.

It catalyses the reaction (+)-lariciresinol + NADP(+) = (+)-pinoresinol + NADPH + H(+). It carries out the reaction (-)-secoisolariciresinol + NADP(+) = (+)-lariciresinol + NADPH + H(+). Reductase involved in lignan (-)-hinokinin biosynthesis. Catalyzes the enantioselective conversion of (+)-pinoresinol into (+)-lariciresinol and of (+)-lariciresinol into (-)-secoisolariciresinol. Abstracts the 4R-hydride from the NADPH cofactor during catalysis. Has also a low phenylcoumaran benzylic ether reductase activity. This Linum corymbulosum (Linum) protein is Bifunctional pinoresinol-lariciresinol reductase (PLR_Lc1).